A 116-amino-acid polypeptide reads, in one-letter code: ATP-dependent Clp protease adapter protein ClpS (116 aa).

Over residues 1–11 (MRRFNTIMQGK) the composition is skewed to polar residues. The tract at residues 1-23 (MRRFNTIMQGKTNGGNGPESGTV) is disordered.

Belongs to the ClpS family. Binds to the N-terminal domain of the chaperone ClpA.

Its function is as follows. Involved in the modulation of the specificity of the ClpAP-mediated ATP-dependent protein degradation. The protein is ATP-dependent Clp protease adapter protein ClpS of Brucella melitensis biotype 2 (strain ATCC 23457).